A 178-amino-acid polypeptide reads, in one-letter code: Endoribonuclease YbeY (178 aa).

Residues His-118, His-122, and His-128 each coordinate Zn(2+). The disordered stretch occupies residues 156-178; it reads YQQDRQDERDRRLLDKSRYFDEP. Basic and acidic residues predominate over residues 159–178; that stretch reads DRQDERDRRLLDKSRYFDEP.

It belongs to the endoribonuclease YbeY family. Zn(2+) is required as a cofactor.

It is found in the cytoplasm. Single strand-specific metallo-endoribonuclease involved in late-stage 70S ribosome quality control and in maturation of the 3' terminus of the 16S rRNA. The sequence is that of Endoribonuclease YbeY from Mycobacterium marinum (strain ATCC BAA-535 / M).